Consider the following 771-residue polypeptide: 5-methyltetrahydropteroyltriglutamate--homocysteine methyltransferase (771 aa).

5-methyltetrahydropteroyltri-L-glutamate is bound by residues 13-16 and Lys128; that span reads RELK. L-homocysteine-binding positions include 451 to 453 and Glu504; that span reads IGS. Residues 451–453 and Glu504 each bind L-methionine; that span reads IGS. Residues 535–536 and Trp581 each bind 5-methyltetrahydropteroyltri-L-glutamate; that span reads RC. Asp619 contacts L-homocysteine. Asp619 is a binding site for L-methionine. Glu625 lines the 5-methyltetrahydropteroyltri-L-glutamate pocket. Zn(2+)-binding residues include His661, Cys663, and Glu685. His714 (proton donor) is an active-site residue. Cys746 serves as a coordination point for Zn(2+).

It belongs to the vitamin-B12 independent methionine synthase family. Zn(2+) is required as a cofactor.

The enzyme catalyses 5-methyltetrahydropteroyltri-L-glutamate + L-homocysteine = tetrahydropteroyltri-L-glutamate + L-methionine. It functions in the pathway amino-acid biosynthesis; L-methionine biosynthesis via de novo pathway; L-methionine from L-homocysteine (MetE route): step 1/1. Catalyzes the transfer of a methyl group from 5-methyltetrahydrofolate to homocysteine resulting in methionine formation. This chain is 5-methyltetrahydropteroyltriglutamate--homocysteine methyltransferase, found in Nitrobacter winogradskyi (strain ATCC 25391 / DSM 10237 / CIP 104748 / NCIMB 11846 / Nb-255).